We begin with the raw amino-acid sequence, 339 residues long: Anthranilate phosphoribosyltransferase (339 aa).

5-phospho-alpha-D-ribose 1-diphosphate contacts are provided by residues Gly81, 84-85, Ser89, 91-94, 109-117, and Ala121; these read GD, NVSS, and KHGNRALSS. Gly81 is an anthranilate binding site. Ser93 is a binding site for Mg(2+). Asn112 provides a ligand contact to anthranilate. Arg167 contacts anthranilate. The Mg(2+) site is built by Asp225 and Glu226.

It belongs to the anthranilate phosphoribosyltransferase family. As to quaternary structure, homodimer. Requires Mg(2+) as cofactor.

The catalysed reaction is N-(5-phospho-beta-D-ribosyl)anthranilate + diphosphate = 5-phospho-alpha-D-ribose 1-diphosphate + anthranilate. The protein operates within amino-acid biosynthesis; L-tryptophan biosynthesis; L-tryptophan from chorismate: step 2/5. Catalyzes the transfer of the phosphoribosyl group of 5-phosphorylribose-1-pyrophosphate (PRPP) to anthranilate to yield N-(5'-phosphoribosyl)-anthranilate (PRA). The polypeptide is Anthranilate phosphoribosyltransferase (Brucella suis biovar 1 (strain 1330)).